The following is a 477-amino-acid chain: UDP-N-acetylmuramate--L-alanine ligase (477 aa).

Residue 112 to 118 coordinates ATP; it reads GTHGKTT.

It belongs to the MurCDEF family.

Its subcellular location is the cytoplasm. The enzyme catalyses UDP-N-acetyl-alpha-D-muramate + L-alanine + ATP = UDP-N-acetyl-alpha-D-muramoyl-L-alanine + ADP + phosphate + H(+). The protein operates within cell wall biogenesis; peptidoglycan biosynthesis. Functionally, cell wall formation. The protein is UDP-N-acetylmuramate--L-alanine ligase of Cupriavidus necator (strain ATCC 17699 / DSM 428 / KCTC 22496 / NCIMB 10442 / H16 / Stanier 337) (Ralstonia eutropha).